Consider the following 186-residue polypeptide: Ribosome maturation factor RimM (186 aa).

A PRC barrel domain is found at 93–168 (EDDFYLVDLI…VLIDPPQEEN (76 aa)). The segment at 163–186 (PPQEENAPEFGRNELGHDDGGEAA) is disordered. Residues 173 to 186 (GRNELGHDDGGEAA) are compositionally biased toward basic and acidic residues.

Belongs to the RimM family. As to quaternary structure, binds ribosomal protein uS19.

Its subcellular location is the cytoplasm. An accessory protein needed during the final step in the assembly of 30S ribosomal subunit, possibly for assembly of the head region. Essential for efficient processing of 16S rRNA. May be needed both before and after RbfA during the maturation of 16S rRNA. It has affinity for free ribosomal 30S subunits but not for 70S ribosomes. This Granulibacter bethesdensis (strain ATCC BAA-1260 / CGDNIH1) protein is Ribosome maturation factor RimM.